Consider the following 39-residue polypeptide: Bomanin Short 3 (39 aa).

Residues 1 to 18 form the signal peptide; it reads MKFLSLAFVLGLLALANA. The propeptide occupies 19–23; it reads TPLNP. Cysteines 32 and 35 form a disulfide.

It belongs to the bomanin family. As to expression, hemolymph (at protein level).

It is found in the secreted. Secreted immune-induced peptide induced by Toll signaling. Has a role in resistance bacterial and fungal infections. The strength of antimicrobial activity appears to correlate with the overall level of expression. Has no activity against the fungus C.glabrata in vitro. The protein is Bomanin Short 3 of Drosophila melanogaster (Fruit fly).